Here is a 433-residue protein sequence, read N- to C-terminus: UDP-N-acetylmuramate--L-alanine ligase (433 aa).

108 to 114 is an ATP binding site; that stretch reads GAHGKTS.

It belongs to the MurCDEF family.

The protein resides in the cytoplasm. The enzyme catalyses UDP-N-acetyl-alpha-D-muramate + L-alanine + ATP = UDP-N-acetyl-alpha-D-muramoyl-L-alanine + ADP + phosphate + H(+). It participates in cell wall biogenesis; peptidoglycan biosynthesis. Cell wall formation. This chain is UDP-N-acetylmuramate--L-alanine ligase, found in Anoxybacillus flavithermus (strain DSM 21510 / WK1).